Here is a 239-residue protein sequence, read N- to C-terminus: Large ribosomal subunit protein uL1 (239 aa).

This sequence belongs to the universal ribosomal protein uL1 family. In terms of assembly, part of the 50S ribosomal subunit.

Functionally, binds directly to 23S rRNA. The L1 stalk is quite mobile in the ribosome, and is involved in E site tRNA release. Protein L1 is also a translational repressor protein, it controls the translation of the L11 operon by binding to its mRNA. This Rhodococcus erythropolis (strain PR4 / NBRC 100887) protein is Large ribosomal subunit protein uL1.